The chain runs to 156 residues: Transcription antitermination protein NusB (156 aa).

The protein belongs to the NusB family.

Its function is as follows. Involved in transcription antitermination. Required for transcription of ribosomal RNA (rRNA) genes. Binds specifically to the boxA antiterminator sequence of the ribosomal RNA (rrn) operons. This Clostridium kluyveri (strain ATCC 8527 / DSM 555 / NBRC 12016 / NCIMB 10680 / K1) protein is Transcription antitermination protein NusB.